Consider the following 422-residue polypeptide: Acylglycerol kinase, mitochondrial (422 aa).

Residue Lys-6 is modified to N6-acetyllysine. Residues 15 to 31 (TTAGLCLLTWGGHWLYG) are hydrophobic. Residues 58-199 (AQVKKATVFL…LDVLQIKGEK (142 aa)) enclose the DAGKc domain. Residues 249-271 (QASISYTGPTERPPNEPEETPVQ) form a disordered region.

Belongs to the AGK family. As to quaternary structure, component of the TIM22 complex, which core is composed of TIMM22, associated with TIMM10 (TIMM10A and/or TIMM10B), TIMM9, AGK and TIMM29. Interacts with SMIM26. Mg(2+) is required as a cofactor. As to expression, highly expressed in muscle, heart, kidney and brain.

It is found in the mitochondrion inner membrane. The protein resides in the mitochondrion intermembrane space. It catalyses the reaction a monoacylglycerol + ATP = a monoacyl-sn-glycero-3-phosphate + ADP + H(+). The catalysed reaction is a 1,2-diacyl-sn-glycerol + ATP = a 1,2-diacyl-sn-glycero-3-phosphate + ADP + H(+). It carries out the reaction an N-acylsphing-4-enine + ATP = an N-acylsphing-4-enine 1-phosphate + ADP + H(+). The enzyme catalyses 1-(9Z-octadecenoyl)-sn-glycerol + ATP = 1-(9Z-octadecenoyl)-sn-glycero-3-phosphate + ADP + H(+). It catalyses the reaction 1,2-di-(9Z-octadecenoyl)-sn-glycerol + ATP = 1,2-di-(9Z-octadecenoyl)-sn-glycero-3-phosphate + ADP + H(+). The catalysed reaction is a 1-acyl-sn-glycerol + ATP = a 1-acyl-sn-glycero-3-phosphate + ADP + H(+). It carries out the reaction 1-hexadecanoyl-sn-glycerol + ATP = 1-hexadecanoyl-sn-glycero-3-phosphate + ADP + H(+). The enzyme catalyses a 2-acylglycerol + ATP = a 2-acyl-sn-glycerol 3-phosphate + ADP + H(+). It catalyses the reaction 2-(5Z,8Z,11Z,14Z-eicosatetraenoyl)-glycerol + ATP = 2-(5Z,8Z,11Z,14Z-eicosatetraenoyl)-sn-glycero-3-phosphate + ADP + H(+). The catalysed reaction is 1-(5Z,8Z,11Z,14Z-eicosatetraenoyl)-sn-glycerol + ATP = 1-(5Z,8Z,11Z,14Z-eicosatetraenoyl)-sn-glycero-3-phosphate + ADP + H(+). It carries out the reaction N-(hexanoyl)sphing-4-enine + ATP = N-hexanoylsphing-4-enine 1-phosphate + ADP + H(+). The protein operates within lipid metabolism; glycerolipid metabolism. Lipid kinase that can phosphorylate both monoacylglycerol and diacylglycerol to form lysophosphatidic acid (LPA) and phosphatidic acid (PA), respectively. Does not phosphorylate sphingosine. Phosphorylates ceramide. Phosphorylates 1,2-dioleoylglycerol more rapidly than 2,3-dioleoylglycerol. Independently of its lipid kinase activity, acts as a component of the TIM22 complex. The TIM22 complex mediates the import and insertion of multi-pass transmembrane proteins into the mitochondrial inner membrane by forming a twin-pore translocase that uses the membrane potential as the external driving force. In the TIM22 complex, required for the import of a subset of metabolite carriers into mitochondria, such as ANT1/SLC25A4 and SLC25A24, while it is not required for the import of TIMM23. Overexpression increases the formation and secretion of LPA, resulting in transactivation of EGFR and activation of the downstream MAPK signaling pathway, leading to increased cell growth. The sequence is that of Acylglycerol kinase, mitochondrial from Homo sapiens (Human).